A 416-amino-acid chain; its full sequence is Acyl-coenzyme A amino acid N-acyltransferase 1 (416 aa).

Serine 125 carries the post-translational modification Phosphoserine. Active-site charge relay system residues include serine 235, aspartate 325, and histidine 359. Serine 414 is subject to Phosphoserine. The short motif at 414–416 (SKL) is the Microbody targeting signal element.

It belongs to the C/M/P thioester hydrolase family. Expressed mainly in liver and kidney with low levels in adrenal and little or no expression in other tissues.

It localises to the peroxisome. The enzyme catalyses tetracosanoyl-CoA + taurine = N-tetracosanoyl-taurine + CoA + H(+). It catalyses the reaction eicosanoyl-CoA + taurine = N-eicosanoyl-taurine + CoA + H(+). It carries out the reaction taurine + octadecanoyl-CoA = N-octadecanoyl-taurine + CoA + H(+). The catalysed reaction is taurine + hexadecanoyl-CoA = N-hexadecanoyl-taurine + CoA + H(+). The enzyme catalyses tetradecanoyl-CoA + taurine = N-tetradecanoyl-taurine + CoA + H(+). It catalyses the reaction dodecanoyl-CoA + taurine = N-dodecanoyl-taurine + CoA + H(+). Acyltransferase which efficiently conjugates very long-chain and long-chain fatty acids to taurine. Shows no conjugation activity in the presence of glycine. In Mus musculus (Mouse), this protein is Acyl-coenzyme A amino acid N-acyltransferase 1.